We begin with the raw amino-acid sequence, 809 residues long: Origin of replication complex subunit 1A (809 aa).

A compositionally biased stretch (low complexity) spans 1 to 47 (MASSLSSKAKTFKSPTKTPTKMYRKSYLSPSSTSLTPPQTPETLTPL). A disordered region spans residues 1 to 69 (MASSLSSKAK…LGNDPIDLPG (69 aa)). Residues 160–185 (DPEIEDCQICFKSHTNTIMIECDDCL) are histone H3 binding. Residues 163-213 (IEDCQICFKSHTNTIMIECDDCLGGFHLNCLKPPLKEVPEGDWICQFCEVK) form a PHD-type zinc finger. The Zn(2+) site is built by cysteine 166, cysteine 169, cysteine 181, cysteine 184, histidine 189, and cysteine 192. A histone H3 binding region spans residues 201–205 (PEGDW). 2 residues coordinate Zn(2+): cysteine 207 and cysteine 210. The 119-residue stretch at 223–341 (PKPPEGKKLA…VHWGSFKRVA (119 aa)) folds into the BAH domain. A histone H3 binding region spans residues 316-321 (ASNDGD). Positions 431-799 (PKSLPCRSKE…DDVAFALKDN (369 aa)) are necessary and sufficient for ORC complex assembly. ATP-binding positions include 466 to 473 (GVPGTGKT) and 466 to 474 (GVPGTGKTI). Mg(2+) contacts are provided by aspartate 556 and glutamate 557. ATP is bound by residues glutamate 557, asparagine 590, and arginine 655.

The protein belongs to the ORC1 family. As to quaternary structure, component of the origin recognition complex (ORC) composed of at least ORC1 (ORC1A or ORC1B), ORC2, ORC3, ORC4, ORC5 and ORC6. ORC is regulated in a cell-cycle and development dependent manner. It is sequentially assembled at the exit from anaphase of mitosis and disassembled as cells enter S phase. Interacts directly with ORC2, ORC3, ORC4 and ORC5. Binds mostly unmodified histone H3, and, with lower efficiency, H3K4me1 H3K4me2 and H3K4me3. As to expression, follow a cell-cycle regulation with a peak at the G1/S-phase. Mostly expressed in siliques, flowers and flower buds, and, to a lower extent, in roots, leaves and stems.

The protein resides in the nucleus. In terms of biological role, essential protein. Component of the origin recognition complex (ORC) that binds origins of replication. It has a role in both chromosomal replication and mating type transcriptional silencing. Binds to the ARS consensus sequence (ACS) of origins of replication. H3K4me3 effector that positively regulates the transcription of a subset of genes. The chain is Origin of replication complex subunit 1A from Arabidopsis thaliana (Mouse-ear cress).